Consider the following 87-residue polypeptide: Acylphosphatase (87 aa).

The Acylphosphatase-like domain maps to 1 to 87 (MAWVHGRVQG…EDYQDFRIRY (87 aa)). Catalysis depends on residues R14 and N32.

This sequence belongs to the acylphosphatase family.

It catalyses the reaction an acyl phosphate + H2O = a carboxylate + phosphate + H(+). The polypeptide is Acylphosphatase (acyP) (Cronobacter sakazakii (strain ATCC BAA-894) (Enterobacter sakazakii)).